The sequence spans 67 residues: Large ribosomal subunit protein uL29 (67 aa).

It belongs to the universal ribosomal protein uL29 family.

This is Large ribosomal subunit protein uL29 from Halorhodospira halophila (strain DSM 244 / SL1) (Ectothiorhodospira halophila (strain DSM 244 / SL1)).